The chain runs to 238 residues: 2-C-methyl-D-erythritol 4-phosphate cytidylyltransferase (238 aa).

This sequence belongs to the IspD/TarI cytidylyltransferase family. IspD subfamily.

The enzyme catalyses 2-C-methyl-D-erythritol 4-phosphate + CTP + H(+) = 4-CDP-2-C-methyl-D-erythritol + diphosphate. Its pathway is isoprenoid biosynthesis; isopentenyl diphosphate biosynthesis via DXP pathway; isopentenyl diphosphate from 1-deoxy-D-xylulose 5-phosphate: step 2/6. Its function is as follows. Catalyzes the formation of 4-diphosphocytidyl-2-C-methyl-D-erythritol from CTP and 2-C-methyl-D-erythritol 4-phosphate (MEP). The polypeptide is 2-C-methyl-D-erythritol 4-phosphate cytidylyltransferase (Salinibacter ruber (strain DSM 13855 / M31)).